A 95-amino-acid chain; its full sequence is MITIKAEVRNDQGKGASRRLRAANKFPAIIYGGSEAAIAIELDHDTTKNLELKPGFYDNTGLTLVINGKETKVKVQAVQRHAFKPKLTHIDFVRI.

This sequence belongs to the bacterial ribosomal protein bL25 family. In terms of assembly, part of the 50S ribosomal subunit; part of the 5S rRNA/L5/L18/L25 subcomplex. Contacts the 5S rRNA. Binds to the 5S rRNA independently of L5 and L18.

This is one of the proteins that binds to the 5S RNA in the ribosome where it forms part of the central protuberance. The protein is Large ribosomal subunit protein bL25 of Yersinia enterocolitica serotype O:8 / biotype 1B (strain NCTC 13174 / 8081).